Here is a 558-residue protein sequence, read N- to C-terminus: Formate--tetrahydrofolate ligase (558 aa).

66–73 (TPAGEGKT) serves as a coordination point for ATP.

This sequence belongs to the formate--tetrahydrofolate ligase family.

The enzyme catalyses (6S)-5,6,7,8-tetrahydrofolate + formate + ATP = (6R)-10-formyltetrahydrofolate + ADP + phosphate. The protein operates within one-carbon metabolism; tetrahydrofolate interconversion. The sequence is that of Formate--tetrahydrofolate ligase from Neisseria gonorrhoeae (strain NCCP11945).